A 249-amino-acid polypeptide reads, in one-letter code: Serine 3-dehydrogenase (249 aa).

NADP(+) is bound at residue 6 to 30 (LITGATSGFGQATARRFVKEGWKVI). Ser-135 provides a ligand contact to substrate. Tyr-148 (proton acceptor) is an active-site residue.

It belongs to the short-chain dehydrogenases/reductases (SDR) family. Homotetramer.

The catalysed reaction is L-serine + NADP(+) = aminoacetaldehyde + CO2 + NADPH. In terms of biological role, catalyzes the oxidation of the hydroxyl group of serine to form 2-aminomalonate semialdehyde which is spontaneously converted into 2-aminoacetaldehyde and CO(2). Also acts on D-serine, L-glycerate, D-glycerate and 2-methyl-DL-serine. Does not act on O-methyl-DL-serine and L-threonine. The protein is Serine 3-dehydrogenase (sdh) of Agrobacterium fabrum (strain C58 / ATCC 33970) (Agrobacterium tumefaciens (strain C58)).